A 253-amino-acid polypeptide reads, in one-letter code: 1-(5-phosphoribosyl)-5-[(5-phosphoribosylamino)methylideneamino] imidazole-4-carboxamide isomerase (253 aa).

Aspartate 11 serves as the catalytic Proton acceptor. Aspartate 132 functions as the Proton donor in the catalytic mechanism.

This sequence belongs to the HisA/HisF family.

The protein localises to the cytoplasm. The enzyme catalyses 1-(5-phospho-beta-D-ribosyl)-5-[(5-phospho-beta-D-ribosylamino)methylideneamino]imidazole-4-carboxamide = 5-[(5-phospho-1-deoxy-D-ribulos-1-ylimino)methylamino]-1-(5-phospho-beta-D-ribosyl)imidazole-4-carboxamide. The protein operates within amino-acid biosynthesis; L-histidine biosynthesis; L-histidine from 5-phospho-alpha-D-ribose 1-diphosphate: step 4/9. In Methylobacterium nodulans (strain LMG 21967 / CNCM I-2342 / ORS 2060), this protein is 1-(5-phosphoribosyl)-5-[(5-phosphoribosylamino)methylideneamino] imidazole-4-carboxamide isomerase.